The chain runs to 319 residues: Mercury resistance probable Hg transport protein (319 aa).

Residues Cys-298, Cys-299, Cys-318, and Cys-319 each coordinate Hg(2+).

In Streptomyces lividans, this protein is Mercury resistance probable Hg transport protein.